The sequence spans 122 residues: Large ribosomal subunit protein uL14 (122 aa).

It belongs to the universal ribosomal protein uL14 family. As to quaternary structure, part of the 50S ribosomal subunit. Forms a cluster with proteins L3 and L19. In the 70S ribosome, L14 and L19 interact and together make contacts with the 16S rRNA in bridges B5 and B8.

In terms of biological role, binds to 23S rRNA. Forms part of two intersubunit bridges in the 70S ribosome. The sequence is that of Large ribosomal subunit protein uL14 from Desulforapulum autotrophicum (strain ATCC 43914 / DSM 3382 / VKM B-1955 / HRM2) (Desulfobacterium autotrophicum).